Here is a 605-residue protein sequence, read N- to C-terminus: Alpha-amylase (605 aa).

An N-terminal signal peptide occupies residues 1-33; that stretch reads MGVRRSLAALLAALLGCATSLVALTVAASPAHA. Ca(2+)-binding residues include asparagine 130 and aspartate 189. Aspartate 219 (nucleophile) is an active-site residue. Histidine 223 is a binding site for Ca(2+). The Proton donor role is filled by glutamate 253. Positions 500–605 constitute a CBM20 domain; sequence GDDCTTVTAR…CSQNFYDSWR (106 aa).

It belongs to the glycosyl hydrolase 13 family. In terms of assembly, monomer. Ca(2+) serves as cofactor.

It catalyses the reaction Endohydrolysis of (1-&gt;4)-alpha-D-glucosidic linkages in polysaccharides containing three or more (1-&gt;4)-alpha-linked D-glucose units.. This Thermomonospora curvata protein is Alpha-amylase (tam).